We begin with the raw amino-acid sequence, 233 residues long: 5'-methylthioadenosine/S-adenosylhomocysteine nucleosidase (233 aa).

Glu-12 (proton acceptor) is an active-site residue. Residues Gly-78, Ile-156, and 177 to 178 (ME) each bind substrate. Asp-201 (proton donor) is an active-site residue.

It belongs to the PNP/UDP phosphorylase family. MtnN subfamily.

It catalyses the reaction S-adenosyl-L-homocysteine + H2O = S-(5-deoxy-D-ribos-5-yl)-L-homocysteine + adenine. It carries out the reaction S-methyl-5'-thioadenosine + H2O = 5-(methylsulfanyl)-D-ribose + adenine. The enzyme catalyses 5'-deoxyadenosine + H2O = 5-deoxy-D-ribose + adenine. Its pathway is amino-acid biosynthesis; L-methionine biosynthesis via salvage pathway; S-methyl-5-thio-alpha-D-ribose 1-phosphate from S-methyl-5'-thioadenosine (hydrolase route): step 1/2. Catalyzes the irreversible cleavage of the glycosidic bond in both 5'-methylthioadenosine (MTA) and S-adenosylhomocysteine (SAH/AdoHcy) to adenine and the corresponding thioribose, 5'-methylthioribose and S-ribosylhomocysteine, respectively. Also cleaves 5'-deoxyadenosine, a toxic by-product of radical S-adenosylmethionine (SAM) enzymes, into 5-deoxyribose and adenine. The polypeptide is 5'-methylthioadenosine/S-adenosylhomocysteine nucleosidase (Listeria monocytogenes serotype 4a (strain HCC23)).